Reading from the N-terminus, the 178-residue chain is MDNTQAIAPPSYSRRQLLNFLAGTTVAVTASAGAYAMGKFFVPPAEKGGAGGGIIAKDVLGNPIPASQILAEAPGTRALVAGLAGDPTYLIVKEDGSLDSIGIVDSCTHLGCTFPWNGNDQEFQCPCHGSRYHPDGSVARGPAPLPLKIVQVAVVDDQIFISPWTDLDPRTGEKPWWV.

A helical transmembrane segment spans residues 17-36 (LLNFLAGTTVAVTASAGAYA). Positions 61 to 161 (GNPIPASQIL…VAVVDDQIFI (101 aa)) constitute a Rieske domain. [2Fe-2S] cluster contacts are provided by C107, H109, C125, and H128. The cysteines at positions 112 and 127 are disulfide-linked.

This sequence belongs to the Rieske iron-sulfur protein family. As to quaternary structure, the 4 large subunits of the cytochrome b6-f complex are cytochrome b6, subunit IV (17 kDa polypeptide, PetD), cytochrome f and the Rieske protein, while the 4 small subunits are PetG, PetL, PetM and PetN. The complex functions as a dimer. [2Fe-2S] cluster is required as a cofactor.

The protein localises to the cellular thylakoid membrane. It catalyses the reaction 2 oxidized [plastocyanin] + a plastoquinol + 2 H(+)(in) = 2 reduced [plastocyanin] + a plastoquinone + 4 H(+)(out). Its function is as follows. Component of the cytochrome b6-f complex, which mediates electron transfer between photosystem II (PSII) and photosystem I (PSI), cyclic electron flow around PSI, and state transitions. In Synechocystis sp. (strain ATCC 27184 / PCC 6803 / Kazusa), this protein is Cytochrome b6-f complex iron-sulfur subunit 1.